We begin with the raw amino-acid sequence, 376 residues long: tRNA-specific 2-thiouridylase MnmA (376 aa).

ATP-binding positions include 17–24 and Met-43; that span reads GMSGGVDS. The interval 103–105 is interaction with target base in tRNA; it reads NPD. Cys-108 acts as the Nucleophile in catalysis. A disulfide bond links Cys-108 and Cys-204. Gly-132 contributes to the ATP binding site. An interaction with tRNA region spans residues 154–156; the sequence is KDQ. Residue Cys-204 is the Cysteine persulfide intermediate of the active site. Positions 316–317 are interaction with tRNA; sequence RY.

It belongs to the MnmA/TRMU family.

The protein resides in the cytoplasm. The catalysed reaction is S-sulfanyl-L-cysteinyl-[protein] + uridine(34) in tRNA + AH2 + ATP = 2-thiouridine(34) in tRNA + L-cysteinyl-[protein] + A + AMP + diphosphate + H(+). Catalyzes the 2-thiolation of uridine at the wobble position (U34) of tRNA, leading to the formation of s(2)U34. The chain is tRNA-specific 2-thiouridylase MnmA from Pseudomonas syringae pv. syringae (strain B728a).